The chain runs to 883 residues: Serine/threonine-protein kinase greatwall (883 aa).

M1 carries the post-translational modification N-acetylmethionine. The Protein kinase domain occupies 35–839 (FTIVKPISRG…IKELKCHPLF (805 aa)). ATP is bound by residues 41 to 49 (ISRGAFGKV) and K62. D156 acts as the Proton acceptor in catalysis. 2 positions are modified to phosphothreonine: T209 and T224. S295, S373, and S456 each carry phosphoserine. Residue T523 is modified to Phosphothreonine. S555, S559, S634, S661, and S672 each carry phosphoserine. T726 is subject to Phosphothreonine. At S729 the chain carries Phosphoserine. At T745 the chain carries Phosphothreonine; by CDK1. The 44-residue stretch at 840-883 (SDVDWENLQHQTMPFIPQPDDETDTSYFEARNNAQHLTVSGFSL) folds into the AGC-kinase C-terminal domain. S879 and S882 each carry phosphoserine.

This sequence belongs to the protein kinase superfamily. AGC Ser/Thr protein kinase family. Phosphorylation at Thr-745 by CDK1 during M phase activates its kinase activity. Maximum phosphorylation occurs in prometaphase.

The protein resides in the cytoplasm. Its subcellular location is the cytoskeleton. It is found in the microtubule organizing center. It localises to the centrosome. The protein localises to the nucleus. It carries out the reaction L-seryl-[protein] + ATP = O-phospho-L-seryl-[protein] + ADP + H(+). It catalyses the reaction L-threonyl-[protein] + ATP = O-phospho-L-threonyl-[protein] + ADP + H(+). In terms of biological role, serine/threonine kinase that plays a key role in M phase by acting as a regulator of mitosis entry and maintenance. Acts by promoting the inactivation of protein phosphatase 2A (PP2A) during M phase: does not directly inhibit PP2A but acts by mediating phosphorylation and subsequent activation of ARPP19 and ENSA at 'Ser-62' and 'Ser-67', respectively. ARPP19 and ENSA are phosphatase inhibitors that specifically inhibit the PPP2R2D (PR55-delta) subunit of PP2A. Inactivation of PP2A during M phase is essential to keep cyclin-B1-CDK1 activity high. Following DNA damage, it is also involved in checkpoint recovery by being inhibited. This chain is Serine/threonine-protein kinase greatwall (MASTL), found in Canis lupus familiaris (Dog).